A 347-amino-acid polypeptide reads, in one-letter code: Pre-B-cell leukemia transcription factor 1 (347 aa).

A disordered region spans residues 1 to 37 (MDDQPRLMHSHPGVGMAGHPSLSQHMQDGTGANEGDV). Residues 38–232 (GRKQDIGDIL…VMILRSRFLD (195 aa)) enclose the PBC domain. The PBC-A stretch occupies residues 45 to 124 (DILQQIMTIT…EGVAGPEKGG (80 aa)). Residues 127–232 (AAAAAAAAAS…VMILRSRFLD (106 aa)) are PBC-B. The segment at residues 233 to 295 (ARRKRRNFNK…NKRIRYKKNI (63 aa)) is a DNA-binding region (homeobox; TALE-type). Polar residues predominate over residues 318-331 (VHGSQANSPSTPSS). A disordered region spans residues 318–347 (VHGSQANSPSTPSSAGGYPSPCYQSDRRIQ).

This sequence belongs to the TALE/PBX homeobox family. In terms of assembly, forms a heterodimer with isoform 2 of meis1; the interaction is necessary for neural fate induction. In terms of tissue distribution, shows broad, weak expression from blastula through gastrula stages. At stage 14/15, expressed in a broad arc that gives rise to the forebrain and eyes. More intensely expressed in the lateral neural folds (presumptive neural crest) and as horizontal stripes in the posterior neural plate that give rise to the hindbrain. As development proceeds, expression progresses posteriorly along the neural folds and at stage 21, expression is pronounced in the prospective hindbrain and in migratory neural crest cells. At later stages (stage 26), expression becomes intense within the dorsal portion of the forebrain, and in the optic cup, caudal branchial arch, peripheral to the pronephric anlage, and in the dorsal anterior half of the spinal cord. Expression remains robust in the hindbrain but gradually becomes more restricted. At stage 28, expressed in the dorsal lateral portion of the neural tube and in the somatic layer of the lateral plate mesoderm that surrounds the pronephric anlage.

Its subcellular location is the nucleus. Functionally, acts as a transcriptional activator in complex with isoform 2 of meis1, to induce posterior neural and neural crest gene expression, and thereby specify hindbrain and neural crest cell fate. Binds to a highly conserved region in the promoter of the neural crest gene zic3. Required for the nuclear transport or retention of isoform 2 of meis1. The protein is Pre-B-cell leukemia transcription factor 1 (pbx1) of Xenopus laevis (African clawed frog).